The chain runs to 566 residues: Urease subunit beta (566 aa).

Positions 129–566 (GGIDTHIHFI…VPMARRYFMF (438 aa)) constitute a Urease domain. The Ni(2+) site is built by His134, His136, and Lys217. At Lys217 the chain carries N6-carboxylysine. His219 serves as a coordination point for substrate. The Ni(2+) site is built by His246 and His272. His320 (proton donor) is an active-site residue. A Ni(2+)-binding site is contributed by Asp360.

Belongs to the metallo-dependent hydrolases superfamily. Urease alpha subunit family. As to quaternary structure, heterohexamer of 3 UreA (alpha) and 3 UreB (beta) subunits. Requires Ni cation as cofactor. Post-translationally, carboxylation allows a single lysine to coordinate two nickel ions.

The protein resides in the cytoplasm. It catalyses the reaction urea + 2 H2O + H(+) = hydrogencarbonate + 2 NH4(+). It participates in nitrogen metabolism; urea degradation; CO(2) and NH(3) from urea (urease route): step 1/1. The polypeptide is Urease subunit beta (Aliarcobacter butzleri (strain RM4018) (Arcobacter butzleri)).